A 536-amino-acid polypeptide reads, in one-letter code: CTP synthase (536 aa).

Residues 1–267 (MSKFVFVTGG…CKETLKYLEL (267 aa)) are amidoligase domain. A CTP-binding site is contributed by S13. S13 is a UTP binding site. Residues 14-19 (SIGKGI) and D71 each bind ATP. Residues D71 and E141 each coordinate Mg(2+). Residues 148–150 (DIE), 188–193 (KTKPTQ), and K224 contribute to the CTP site. UTP-binding positions include 188–193 (KTKPTQ) and K224. Residues 292–534 (KVALVGKYIE…IKSSQENLTQ (243 aa)) enclose the Glutamine amidotransferase type-1 domain. An L-glutamine-binding site is contributed by G354. C381 (nucleophile; for glutamine hydrolysis) is an active-site residue. L-glutamine is bound by residues 382–385 (LGMQ), E405, and R462. Active-site residues include H507 and E509.

It belongs to the CTP synthase family. In terms of assembly, homotetramer.

The catalysed reaction is UTP + L-glutamine + ATP + H2O = CTP + L-glutamate + ADP + phosphate + 2 H(+). The enzyme catalyses L-glutamine + H2O = L-glutamate + NH4(+). It catalyses the reaction UTP + NH4(+) + ATP = CTP + ADP + phosphate + 2 H(+). The protein operates within pyrimidine metabolism; CTP biosynthesis via de novo pathway; CTP from UDP: step 2/2. With respect to regulation, allosterically activated by GTP, when glutamine is the substrate; GTP has no effect on the reaction when ammonia is the substrate. The allosteric effector GTP functions by stabilizing the protein conformation that binds the tetrahedral intermediate(s) formed during glutamine hydrolysis. Inhibited by the product CTP, via allosteric rather than competitive inhibition. Functionally, catalyzes the ATP-dependent amination of UTP to CTP with either L-glutamine or ammonia as the source of nitrogen. Regulates intracellular CTP levels through interactions with the four ribonucleotide triphosphates. The chain is CTP synthase from Prochlorococcus marinus (strain MIT 9312).